Reading from the N-terminus, the 530-residue chain is tRNA-2-methylthio-N(6)-dimethylallyladenosine synthase (530 aa).

The MTTase N-terminal domain occupies 19–134 (RTYEVRTYGC…LPTLLERARH (116 aa)). [4Fe-4S] cluster contacts are provided by cysteine 28, cysteine 63, cysteine 97, cysteine 171, cysteine 175, and cysteine 178. Residues 157 to 387 (RDEIASGWVS…TALQERISHE (231 aa)) enclose the Radical SAM core domain. Residues 390-460 (QRVVGRTVEV…PFHLIADSVD (71 aa)) enclose the TRAM domain. The disordered stretch occupies residues 509 to 530 (VPTTASTSAPVGDGSAHPRHRA).

The protein belongs to the methylthiotransferase family. MiaB subfamily. As to quaternary structure, monomer. The cofactor is [4Fe-4S] cluster.

The protein resides in the cytoplasm. The catalysed reaction is N(6)-dimethylallyladenosine(37) in tRNA + (sulfur carrier)-SH + AH2 + 2 S-adenosyl-L-methionine = 2-methylsulfanyl-N(6)-dimethylallyladenosine(37) in tRNA + (sulfur carrier)-H + 5'-deoxyadenosine + L-methionine + A + S-adenosyl-L-homocysteine + 2 H(+). In terms of biological role, catalyzes the methylthiolation of N6-(dimethylallyl)adenosine (i(6)A), leading to the formation of 2-methylthio-N6-(dimethylallyl)adenosine (ms(2)i(6)A) at position 37 in tRNAs that read codons beginning with uridine. The chain is tRNA-2-methylthio-N(6)-dimethylallyladenosine synthase from Clavibacter sepedonicus (Clavibacter michiganensis subsp. sepedonicus).